We begin with the raw amino-acid sequence, 639 residues long: Signal recognition particle receptor subunit alpha (639 aa).

Residues 132-317 (APTTMKKFED…STKPSATKGT (186 aa)) form a disordered region. 2 stretches are compositionally biased toward basic and acidic residues: residues 137–146 (KKFEDSEKAK) and 153–165 (IETRGEKPKEKAK). S178 bears the Phosphoserine mark. Residues 204–240 (ELSKEEQIRRKREEFIQKHGRGMEKSSKSSKSDAPKE) show a composition bias toward basic and acidic residues. T285 carries the phosphothreonine modification. A phosphoserine mark is found at S297, S298, and S299. The segment covering 305-315 (AQNSTKPSATK) has biased composition (polar residues). The tract at residues 420–637 (YVVTFCGVNG…NAKAVVAALM (218 aa)) is NG domain. 426–433 (GVNGVGKS) lines the GTP pocket. A Phosphoserine modification is found at S474. 521 to 525 (DTAGR) provides a ligand contact to GTP. Phosphothreonine is present on T579. Residue 589-592 (TKFD) coordinates GTP.

This sequence belongs to the GTP-binding SRP family. In terms of assembly, heterodimer with SRPRB. Interacts with the signal recognition particle (SRP) complex subunit SRP54.

The protein resides in the endoplasmic reticulum membrane. Component of the SRP (signal recognition particle) receptor. Ensures, in conjunction with the signal recognition particle, the correct targeting of the nascent secretory proteins to the endoplasmic reticulum membrane system. Forms a guanosine 5'-triphosphate (GTP)-dependent complex with the SRP subunit SRP54. SRP receptor compaction and GTPase rearrangement drive SRP-mediated cotranslational protein translocation into the ER. The chain is Signal recognition particle receptor subunit alpha from Bos taurus (Bovine).